Consider the following 656-residue polypeptide: UvrABC system protein B (656 aa).

A Helicase ATP-binding domain is found at 29–414 (KLSEFKTKQQ…SLSQNNVIEQ (386 aa)). 42–49 (GATGTGKT) serves as a coordination point for ATP. A Beta-hairpin motif is present at residues 95-118 (YFDFYQPEAYLPSKGIYIEKSATV). A Helicase C-terminal domain is found at 434-596 (QVEDLIEEII…KTPKTVVKPL (163 aa)). In terms of domain architecture, UVR spans 614-649 (AALIKQLTKEMKKAAANQNYELAIEIRDSIFELEKE).

The protein belongs to the UvrB family. Forms a heterotetramer with UvrA during the search for lesions. Interacts with UvrC in an incision complex.

It localises to the cytoplasm. Functionally, the UvrABC repair system catalyzes the recognition and processing of DNA lesions. A damage recognition complex composed of 2 UvrA and 2 UvrB subunits scans DNA for abnormalities. Upon binding of the UvrA(2)B(2) complex to a putative damaged site, the DNA wraps around one UvrB monomer. DNA wrap is dependent on ATP binding by UvrB and probably causes local melting of the DNA helix, facilitating insertion of UvrB beta-hairpin between the DNA strands. Then UvrB probes one DNA strand for the presence of a lesion. If a lesion is found the UvrA subunits dissociate and the UvrB-DNA preincision complex is formed. This complex is subsequently bound by UvrC and the second UvrB is released. If no lesion is found, the DNA wraps around the other UvrB subunit that will check the other stand for damage. This chain is UvrABC system protein B, found in Mycoplasma genitalium (strain ATCC 33530 / DSM 19775 / NCTC 10195 / G37) (Mycoplasmoides genitalium).